Here is a 644-residue protein sequence, read N- to C-terminus: Serine/threonine kinase YeaG (644 aa).

The protein belongs to the PrkA family. As to quaternary structure, monomer.

It is found in the cytoplasm. It catalyses the reaction L-seryl-[protein] + ATP = O-phospho-L-seryl-[protein] + ADP + H(+). It carries out the reaction L-threonyl-[protein] + ATP = O-phospho-L-threonyl-[protein] + ADP + H(+). Kinase that plays a role in the adaptation to sustained nitrogen starvation. In Escherichia coli O157:H7, this protein is Serine/threonine kinase YeaG (yeaG).